Reading from the N-terminus, the 313-residue chain is MAQPIVVAALYKFVTLEDYVNLREPLLQAMLDNGIKGTLLIAEEGINGTVSGSREGIDGLLAWLKNDPRMVDIDHKESYCDEQPFYRTKVKLKKEIVTLGVPGVDPNKKVGTYVEPQDWNALISDPEVLLIDTRNDYEVSIGTFEGAIDPKTTSFREFPDYIKAHFDPSKHKKVAMFCTGGIRCEKASSYMLSEGFDEVFHLKGGILKYLEEVPQQESKWQGDCFVFDNRVTVRHDLSEGDYDQCHACRTPVSVEDRASEHYVPGISCPHCWDKLSEKTRRSAIDRQKQIELAKARNMPHPIGYNYKQSSSEA.

The region spanning 124-218 (SDPEVLLIDT…YLEEVPQQES (95 aa)) is the Rhodanese domain. Catalysis depends on Cys-178, which acts as the Cysteine persulfide intermediate.

This sequence belongs to the TrhO family.

It catalyses the reaction uridine(34) in tRNA + AH2 + O2 = 5-hydroxyuridine(34) in tRNA + A + H2O. In terms of biological role, catalyzes oxygen-dependent 5-hydroxyuridine (ho5U) modification at position 34 in tRNAs. This chain is tRNA uridine(34) hydroxylase, found in Pseudomonas fluorescens (strain ATCC BAA-477 / NRRL B-23932 / Pf-5).